Here is a 200-residue protein sequence, read N- to C-terminus: Recombination protein RecR (200 aa).

A C4-type zinc finger spans residues 60-75 (CVYCQALTEDDVCNIC). Residues 83-177 (TKLCIIESML…KISRIGFGVP (95 aa)) enclose the Toprim domain.

It belongs to the RecR family.

Functionally, may play a role in DNA repair. It seems to be involved in an RecBC-independent recombinational process of DNA repair. It may act with RecF and RecO. The chain is Recombination protein RecR from Francisella tularensis subsp. holarctica (strain OSU18).